A 258-amino-acid chain; its full sequence is Putative L-lactate dehydrogenase operon regulatory protein (258 aa).

In terms of domain architecture, HTH gntR-type spans 6-74 (RRLSDEVADR…RGGGTFIRWR (69 aa)). The H-T-H motif DNA-binding region spans 34-53 (ERQLAMQLGVSRNSLREALA).

Its function is as follows. May be a regulatory protein for the LCT genes. This Escherichia coli (strain K12) protein is Putative L-lactate dehydrogenase operon regulatory protein (lldR).